A 360-amino-acid chain; its full sequence is MASSSSNRQFSHRNANTFLTYPKCPENPEIACQMIWELVVRWIPKYILCAREAHKDGSLHLHALLQTEKPVRISDSRFFDINGFHPNIQSAKSVNRVRDYILKEPLAVFERGTFIPRKSPFLGKSDSEVKEKKPSKDEIMRDIISHATSKEEYLSMIQKELPFDWSTKLQYFEYSANKLFPEIQEEFTNPHPPSSPDLLCNESINDWLQPNIFQSSDERSRKQSLYIVGPTRTGKSTWARSLGVHNYWQNNVDWSSYNEDAIYNIVDDIPFKFCPCWKQLVGCQRDFIVNPKYGKKKKVQKKSKPTIILANSDEDWMKEMTPGQLEYFEANCIIYIMSPGEKWYSPPELPPTEAVHSDRS.

The region spanning Ser11–Phe114 is the CRESS-DNA virus Rep endonuclease domain. An RCR-1 motif is present at residues Phe18–Tyr21. Positions 52, 60, and 62 each coordinate a divalent metal cation. The RCR-2 motif lies at His60–His62. Tyr100 (for DNA cleavage activity) is an active-site residue. Positions Tyr100–Lys103 match the RCR-3 motif. Glu104 provides a ligand contact to a divalent metal cation. The interval Ser175–Phe187 is oligomerization. Gly229–Ser236 is a binding site for ATP. Positions Val252–Pro270 are transactivation. Residues Lys292–Ser303 carry the Nuclear localization signal motif.

It belongs to the geminiviridae Rep protein family. Homooligomer. Rep binds to repeated DNA motifs (iterons). Forms the O-complex, which is a Rep-DNA complex involved in the initiation of RCR. Part of the C- and V-complexes which are RepA-Rep-DNA complexes involved in the c-sense and v-sense transcription. Mg(2+) is required as a cofactor. Requires Mn(2+) as cofactor.

The protein localises to the host nucleus. Its function is as follows. Essential for the replication of viral ssDNA. The closed circular ssDNA genome is first converted to a superhelical dsDNA. Rep binds a specific region at the genome origin of replication. It introduces an endonucleolytic nick within the conserved sequence 5'-TAATATTAC-3' in the intergenic region of the genome present in all geminiviruses, thereby initiating the rolling circle replication (RCR). Following cleavage, binds covalently to the 5'-phosphate of DNA as a tyrosyl ester. The cleavage gives rise to a free 3'-OH that serves as a primer for the cellular DNA polymerase. The polymerase synthesizes the (+) strand DNA by rolling circle mechanism. After one round of replication, a Rep-catalyzed nucleotidyl transfer reaction releases a circular single-stranded virus genome, thereby terminating the replication. Displays origin-specific DNA cleavage, nucleotidyl transferase, ATPase and helicase activities. Acts as an inhibitor of C-sense gene transcription. This chain is Replication-associated protein, found in Maize streak virus genotype A (isolate Nigeria) (MSV).